The primary structure comprises 90 residues: Small ribosomal subunit protein uS17 (90 aa).

This sequence belongs to the universal ribosomal protein uS17 family. In terms of assembly, part of the 30S ribosomal subunit.

One of the primary rRNA binding proteins, it binds specifically to the 5'-end of 16S ribosomal RNA. In Methylobacillus flagellatus (strain ATCC 51484 / DSM 6875 / VKM B-1610 / KT), this protein is Small ribosomal subunit protein uS17.